A 357-amino-acid chain; its full sequence is Peptide chain release factor 1 (357 aa).

Q236 carries the post-translational modification N5-methylglutamine.

This sequence belongs to the prokaryotic/mitochondrial release factor family. Post-translationally, methylated by PrmC. Methylation increases the termination efficiency of RF1.

It localises to the cytoplasm. Peptide chain release factor 1 directs the termination of translation in response to the peptide chain termination codons UAG and UAA. This is Peptide chain release factor 1 from Mycolicibacterium paratuberculosis (strain ATCC BAA-968 / K-10) (Mycobacterium paratuberculosis).